A 204-amino-acid polypeptide reads, in one-letter code: Large ribosomal subunit protein uL4 (204 aa).

Positions 44–76 (KRQGTQSAKTRSEVRGGGIKPWRQKGTGRARQG) are disordered.

The protein belongs to the universal ribosomal protein uL4 family. As to quaternary structure, part of the 50S ribosomal subunit.

Functionally, one of the primary rRNA binding proteins, this protein initially binds near the 5'-end of the 23S rRNA. It is important during the early stages of 50S assembly. It makes multiple contacts with different domains of the 23S rRNA in the assembled 50S subunit and ribosome. In terms of biological role, forms part of the polypeptide exit tunnel. The protein is Large ribosomal subunit protein uL4 of Clostridium perfringens (strain ATCC 13124 / DSM 756 / JCM 1290 / NCIMB 6125 / NCTC 8237 / Type A).